A 158-amino-acid chain; its full sequence is Snaclec alboaggregin-D subunit alpha (158 aa).

The N-terminal stretch at 1–23 is a signal peptide; it reads MGRFIFGSFGLLVVFLSLSGTGA. Disulfide bonds link cysteine 27–cysteine 38, cysteine 55–cysteine 152, and cysteine 127–cysteine 144. In terms of domain architecture, C-type lectin spans 34–153; that stretch reads YDRYCYQAFS…CAELNPFICK (120 aa).

This sequence belongs to the snaclec family. Tetramer of heterodimers of alpha and beta subunits (alphabeta)(4); disulfide-linked. Expressed by the venom gland.

The protein resides in the secreted. Its function is as follows. Snaclec that induces human platelet aggregation in the absence of any cofactor with the EC(50) of 0.25 nM and causes tyrosine phosphorylation in human platelets. Antibodies against either platelet GPIbalpha (GP1BA) or GPVI (GP6) inhibit alboaggregin D-induced platelet aggregation. Only the combination of these two antibodies completely inhibit aggregation, suggesting that it acts through both GPIbalpha (GP1BA) and GPVI (GP6). This Trimeresurus albolabris (White-lipped pit viper) protein is Snaclec alboaggregin-D subunit alpha.